We begin with the raw amino-acid sequence, 261 residues long: Mannose-specific lectin 2 (261 aa).

The first 23 residues, 1–23 (MAKLLLFLLPAILGLLIPRSAVA), serve as a signal peptide directing secretion. 2 Bulb-type lectin domains span residues 26-131 (TNYL…PWVP) and 145-252 (DNLL…SKRS). Residues 51 to 55 (QNDCN), Tyr59, Trp63, Gln64, 170 to 174 (QGDCN), Tyr178, and 182 to 185 (YGWQ) contribute to the beta-D-mannose site. The Carbohydrate-binding motif 1 signature appears at 51–59 (QNDCNLVLY). 2 disulfides stabilise this stretch: Cys54–Cys74 and Cys173–Cys195. Residues 170 to 178 (QGDCNLVLY) carry the Carbohydrate-binding motif 2 motif.

Forms heterotetramer of 2 chains 1 and 2 chains 2 arranged as a dimer of chain 1 and chain 2 heterodimers.

Functionally, mannose-specific lectin. Shows agglutinating activity towards erythrocytes from rabbit. This is Mannose-specific lectin 2 from Colocasia esculenta (Wild taro).